The chain runs to 359 residues: UPF0283 membrane protein R01807 (359 aa).

2 helical membrane passes run 76 to 96 (FGKIAAGAFGILISLAVGLWI) and 109 to 129 (WLGYGAVAVVAIGVIAFLIVV).

The protein belongs to the UPF0283 family.

It is found in the cell inner membrane. The sequence is that of UPF0283 membrane protein R01807 from Rhizobium meliloti (strain 1021) (Ensifer meliloti).